The sequence spans 94 residues: MTINYQFGDVDAHGAMIRAQAASLEAEHQAIVRDVLAAGDFWGGAGSVACQEFITQLGRNFQVIYEQANAHGQKVQAAGNNMAQTDSAVGSSWA.

The protein belongs to the WXG100 family. ESAT-6 subfamily.

Its subcellular location is the secreted. The protein is ESAT-6-like protein EsxN of Mycobacterium bovis (strain ATCC BAA-935 / AF2122/97).